The chain runs to 459 residues: Ribulose bisphosphate carboxylase large chain (459 aa).

Position 4 is an N6,N6,N6-trimethyllysine (K4). Substrate is bound by residues N113 and T163. K165 acts as the Proton acceptor in catalysis. K167 contacts substrate. Mg(2+)-binding residues include K191, D193, and E194. K191 is subject to N6-carboxylysine. Catalysis depends on H284, which acts as the Proton acceptor. Substrate is bound by residues R285, H317, and S369.

The protein belongs to the RuBisCO large chain family. Type I subfamily. Heterohexadecamer of 8 large chains and 8 small chains; disulfide-linked. The disulfide link is formed within the large subunit homodimers. The cofactor is Mg(2+). Post-translationally, the disulfide bond which can form in the large chain dimeric partners within the hexadecamer appears to be associated with oxidative stress and protein turnover.

The protein localises to the plastid. It localises to the chloroplast. The catalysed reaction is 2 (2R)-3-phosphoglycerate + 2 H(+) = D-ribulose 1,5-bisphosphate + CO2 + H2O. It catalyses the reaction D-ribulose 1,5-bisphosphate + O2 = 2-phosphoglycolate + (2R)-3-phosphoglycerate + 2 H(+). Functionally, ruBisCO catalyzes two reactions: the carboxylation of D-ribulose 1,5-bisphosphate, the primary event in carbon dioxide fixation, as well as the oxidative fragmentation of the pentose substrate in the photorespiration process. Both reactions occur simultaneously and in competition at the same active site. This chain is Ribulose bisphosphate carboxylase large chain, found in Roridula gorgonias (South African fly bush).